Here is a 620-residue protein sequence, read N- to C-terminus: Probably inactive leucine-rich repeat receptor-like protein kinase At5g48380 (620 aa).

The first 27 residues, 1 to 27 (MMMGRLVFVIWLYNCLCLLLLSSLVDA), serve as a signal peptide directing secretion. Topologically, residues 28 to 228 (DQANIDCLRT…SASSSRGKVV (201 aa)) are extracellular. Asparagine 56, asparagine 111, asparagine 119, and asparagine 147 each carry an N-linked (GlcNAc...) asparagine glycan. LRR repeat units lie at residues 101-124 (DLTGLDLSRNNFSGPLPANISTLI), 126-148 (LVTILDLSYNSFSGEIPMLISNI), 150-172 (FLNTLMLQHNQFTGTLPPQLAQL), and 174-196 (RLKTFSVSDNRLVGPIPNFNQTL). An N-linked (GlcNAc...) asparagine glycan is attached at asparagine 193. The helical transmembrane segment at 229 to 249 (IIAAVGGLTAAALVVGVVLFF) threads the bilayer. Over 250–620 (YFRKLGAVRK…DFIEELIVAR (371 aa)) the chain is Cytoplasmic. A Phosphothreonine modification is found at threonine 300. In terms of domain architecture, Protein kinase spans 303–596 (FKKDNIIATG…RAIGESYNFT (294 aa)). ATP contacts are provided by residues 309 to 317 (IATGRTGTM) and lysine 331. Threonine 463 carries the phosphothreonine modification. Tyrosine 479 is modified (phosphotyrosine). The residue at position 482 (threonine 482) is a Phosphothreonine.

Belongs to the protein kinase superfamily. Ser/Thr protein kinase family.

Its subcellular location is the cell membrane. The protein is Probably inactive leucine-rich repeat receptor-like protein kinase At5g48380 of Arabidopsis thaliana (Mouse-ear cress).